A 2327-amino-acid polypeptide reads, in one-letter code: Pre-mRNA-processing-splicing factor 8 homolog (2327 aa).

Polar residues predominate over residues 1-14; it reads MDDTNSNINQSNES. Positions 1 to 20 are disordered; it reads MDDTNSNINQSNESQHLEEK. The interval 801–1292 is reverse transcriptase homology domain; that stretch reads TTVHWLEKRR…KIQTRVKIGL (492 aa). Positions 1293-1566 are linker; it reads NSKMPNRFPP…TLKISLIQIF (274 aa). The segment at 1502–1515 is important for branch point selection; the sequence is MKYKKLTHAQRSGL. The restriction endonuclease homology domain stretch occupies residues 1570–1740; the sequence is LWQKIHESLV…LRERIRKGLQ (171 aa). Residues 1657–2023 are involved in interaction with pre-mRNA 5' splice site; it reads GDFDSHDIER…QIAEIEKQKT (367 aa). Residues 1755 to 2008 are RNase H homology domain; that stretch reads NFGELFSNKI…ILGMEISAPS (254 aa). In terms of domain architecture, MPN spans 2093–2223; that stretch reads TYVFPKNILK…LTAYHLTPSG (131 aa).

In terms of assembly, part of the U5 snRNP complex and of the U4/U6-U5 tri-snRNP complex.

The protein resides in the nucleus speckle. Functionally, functions as a scaffold that mediates the ordered assembly of spliceosomal proteins and snRNAs. Required for the assembly of the U4/U6-U5 tri-snRNP complex. Functions as a scaffold that positions spliceosomal U2, U5 and U6 snRNAs at splice sites on pre-mRNA substrates, so that splicing can occur. Interacts with both the 5' and the 3' splice site. The sequence is that of Pre-mRNA-processing-splicing factor 8 homolog (prpf8) from Dictyostelium discoideum (Social amoeba).